Reading from the N-terminus, the 382-residue chain is Carbamoyl phosphate synthase small chain (382 aa).

Residues 1–187 (MPTPALLVLA…EFRPQTATEE (187 aa)) are CPSase. Positions 47, 239, and 241 each coordinate L-glutamine. A Glutamine amidotransferase type-1 domain is found at 191–377 (TVVAIDFGVK…VAQMRAYRQQ (187 aa)). The active-site Nucleophile is the Cys267. L-glutamine contacts are provided by Leu268, Gln271, Asn307, Gly309, and Phe310. Active-site residues include His350 and Glu352.

Belongs to the CarA family. As to quaternary structure, composed of two chains; the small (or glutamine) chain promotes the hydrolysis of glutamine to ammonia, which is used by the large (or ammonia) chain to synthesize carbamoyl phosphate. Tetramer of heterodimers (alpha,beta)4.

It carries out the reaction hydrogencarbonate + L-glutamine + 2 ATP + H2O = carbamoyl phosphate + L-glutamate + 2 ADP + phosphate + 2 H(+). The catalysed reaction is L-glutamine + H2O = L-glutamate + NH4(+). It participates in amino-acid biosynthesis; L-arginine biosynthesis; carbamoyl phosphate from bicarbonate: step 1/1. It functions in the pathway pyrimidine metabolism; UMP biosynthesis via de novo pathway; (S)-dihydroorotate from bicarbonate: step 1/3. Small subunit of the glutamine-dependent carbamoyl phosphate synthetase (CPSase). CPSase catalyzes the formation of carbamoyl phosphate from the ammonia moiety of glutamine, carbonate, and phosphate donated by ATP, constituting the first step of 2 biosynthetic pathways, one leading to arginine and/or urea and the other to pyrimidine nucleotides. The small subunit (glutamine amidotransferase) binds and cleaves glutamine to supply the large subunit with the substrate ammonia. In Thermosynechococcus vestitus (strain NIES-2133 / IAM M-273 / BP-1), this protein is Carbamoyl phosphate synthase small chain.